The following is a 229-amino-acid chain: Germin-like protein 3-6 (229 aa).

The N-terminal stretch at 1-31 (MEHSFKTIAAGVVIVVLLLQQAPVLIRATDA) is a signal peptide. Cys38 and Cys53 are joined by a disulfide. The Cupin type-1 domain maps to 67 to 219 (SKIATGGDVN…ALRVDAGVVE (153 aa)). Residues Asn80 and Asn83 are each glycosylated (N-linked (GlcNAc...) asparagine). Residues His116, His118, Glu123, and His165 each coordinate Mn(2+).

This sequence belongs to the germin family. In terms of assembly, oligomer (believed to be a pentamer but probably hexamer).

It localises to the secreted. The protein localises to the extracellular space. The protein resides in the apoplast. May play a role in plant defense. Probably has no oxalate oxidase activity even if the active site is conserved. This is Germin-like protein 3-6 from Oryza sativa subsp. japonica (Rice).